Here is an 89-residue protein sequence, read N- to C-terminus: Small ribosomal subunit protein bS20 (89 aa).

2 disordered regions span residues 1 to 25 and 69 to 89; these read MANIKSAIKRAKTSEKRRAHNASMK and KNAASRQKSRLAKKLNSIQAS. Residues 7–20 show a composition bias toward basic residues; it reads AIKRAKTSEKRRAH.

The protein belongs to the bacterial ribosomal protein bS20 family.

Functionally, binds directly to 16S ribosomal RNA. This chain is Small ribosomal subunit protein bS20, found in Geobacillus kaustophilus (strain HTA426).